A 1377-amino-acid chain; its full sequence is MSGKPAARQGDMTQYGGSIVQGSAGVRIGAPTGVACSVCPGGVTSGHPVNPLLGAKVLPGETDIALPGPLPFILSRTYSSYRTKTPAPVGSLGPGWKMPADIRLQLRDNTLILSDNGGRSLYFEHLFPGEDGYSRSESLWLVRGGVAKLDEGHRLAALWQALPEELRLSPHRYLATNSPQGPWWLLGWCERVPEADEVLPAPLPPYRVLTGLVDRFGRTQTFHREAAGEFSGEITGVTDGAWRHFRLVLTTQAQRAEEARQQAISGGTEPSAFPDTLPGYTEYGRDNGIRLSAVWLTHDPEYPENLPAAPLVRYGWTPRGELAVVYDRSGKQVRSFTYDDKYRGRMVAHRHTGRPEIRYRYDSDGRVTEQLNPAGLSYTYQYEKDRITITDSLDRREVLHTQGEAGLKRVVKKEHADGSVTQSQFDAVGRLRAQTDAAGRTTEYSPDVVTGLITRITTPDGRASAFYYNHHNQLTSATGPDGLELRREYDELGRLIQETAPDGDITRYRYDNPHSDLPCATEDATGSRKTMTWSRYGQLLSFTDCSGYVTRYDHDRFGQMTAVHREEGLSQYRAYDSRGQLIAVKDTQGHETRYEYNIAGDLTAVIAPDGSRNGTQYDAWGKAVRTTQGGLTRSMEYDAAGRVIRLTSENGSHTTFRYDVLDRLIQETGFDGRTQRYHHDLTGKLIRSEDEGLVTHWHYDEADRLTHRTVKGETAERWQYDERGWLTDISHISEGHRVAVHYRYDEKGRLTGERQTVHHPQTEALLWQHETRHAYNAQGLANRCIPDSLPAVEWLTYGSGYLAGMKLGDTPLVEYTRDRLHRETLRSFGRYELTTAYTPAGQLQSQHLNSLLSDRDYTWNDNGELIRISSPRQTRSYSYSTTGRLTGVHTTAANLDIRIPYATDPAGNRLPDPELHPDSTLSMWPDNRIARDAHYLYRYDRHGRLTEKTDLIPEGVIRTDDERTHRYHYDSQHRLVHYTRTQYEEPLVESRYLYDPLGRRVAKRVWRRERDLTGWMSLSRKPQVTWYGWDGDRLTTIQNDRTRIQTIYQPGSFTPLIRVETATGELAKTQRRSLADALQQSGGEDGGSVVFPPVLVQMLDRLESEILADRVSEESRRWLASCGLTVEQMQNQMDPVYTPARKIHLYHCDHRGLPLALISKEGTTEWCAEYDEWGNLLNEENPHQLQQLIRLPGQQYDEESGLYYNRHRYYDPLQGRYITQDPIGLKGGWNFYQYPLNPVTNTDPLGLEVFPRPFPLPIPWPKSPAQQQADDNAAKALTKWWNDTASQRIFDSLILNNPGLALDITMIASRGNVADTGITDRVNDIINDRFWSDGKKPDRCDVLQELIDCGDISAKDAKSTQKAWNCRHSRQSNDKKR.

28 repeat units span residues 330-352 (GKQV…HRHT), 353-374 (GRPE…LNPA), 375-417 (GLSY…EHAD), 418-438 (GSVT…TDAA), 439-460 (GRTT…TTPD), 461-481 (GRAS…TGPD), 482-502 (GLEL…TAPD), 503-525 (GDIT…EDAT), 526-546 (GSRK…TDCS), 547-567 (GYVT…HREE), 568-588 (GLSQ…KDTQ), 589-609 (GHET…IAPD), 610-629 (GSRN…TTQG), 630-650 (GLTR…TSEN), 651-671 (GSHT…TGFD), 672-691 (GRTQ…SEDE), 692-711 (GLVT…RTVK), 712-734 (GETA…HISE), 735-758 (GHRV…QTVH), 808-828 (GDTP…LRSF), 829-850 (GRYE…HLNS), 851-871 (LLSD…ISSP), 872-894 (RQTR…TAAN), 895-930 (LDIR…NRIA), 931-959 (RDAH…VIRT), 960-984 (DDER…TQYE), 985-1019 (EPLV…MSLS), and 1162-1186 (GTTE…HQLQ). Positions 330-1186 (GKQVRSFTYD…LNEENPHQLQ (857 aa)) are 28 X approximate tandem repeats. Residues 1356–1377 (DAKSTQKAWNCRHSRQSNDKKR) are disordered.

Belongs to the RHS family.

In terms of biological role, rhs elements have a nonessential function. They may play an important role in the natural ecology of the cell. This chain is Protein RhsA (rhsA), found in Escherichia coli (strain K12).